Consider the following 174-residue polypeptide: Small t antigen (174 aa).

Met-1 carries the post-translational modification N-acetylmethionine; by host. The region spanning 12–75 is the J domain; it reads QLMDLLGLER…VKYAHQPDFG (64 aa). The C4-type; atypical zinc finger occupies 103–116; it reads CAKKMSANCICLLC. The H1C3-type; atypical zinc-finger motif lies at 122-143; sequence HENRKLYRKDPLVWVDCYCFDC.

Interacts with host PPP2R1A; the interaction inhibits PP2A activity.

It is found in the host cytoplasm. It localises to the host nucleus. Its function is as follows. Promotes efficient viral genome replication by accelerating both G1 and S phase progression of the cell cycle. Inhibits host PP2A by binding to the A subunit, thereby displacing lower affinity regulatory B subunit. Inactivation of PP2A in turn results in the transactivation of cyclin A and cyclin D1 promoters. Late during the infection cycle, ST may induce dephosphorylation of host eIF4E-binding protein EIF4EBP1 leading to the inhibition of cap-dependent translation. May establish and maintain high levels of viral genomes during persistent infection in cell culture. The sequence is that of Small t antigen from Simian virus 40 (SV40).